A 50-amino-acid polypeptide reads, in one-letter code: MNVYSVFIFAILAISSASGIFLPGGGGKKCGGYGGGYGSGVIIGAERPKK.

This chain is Fungus-induced protein 3 (fip-3), found in Caenorhabditis elegans.